Reading from the N-terminus, the 446-residue chain is Ribosomal protein uS12 methylthiotransferase RimO (446 aa).

Residues 7–118 (PKIAFAHLGC…IVEVIERVER (112 aa)) enclose the MTTase N-terminal domain. Residues cysteine 16, cysteine 52, cysteine 81, cysteine 156, cysteine 160, and cysteine 163 each contribute to the [4Fe-4S] cluster site. One can recognise a Radical SAM core domain in the interval 142 to 371 (TTPAPVAYLR…MELQQPIAQR (230 aa)). The 67-residue stretch at 374-440 (AAEVGKIVPV…IYDLYGIIPA (67 aa)) folds into the TRAM domain.

This sequence belongs to the methylthiotransferase family. RimO subfamily. Requires [4Fe-4S] cluster as cofactor.

The protein resides in the cytoplasm. The catalysed reaction is L-aspartate(89)-[ribosomal protein uS12]-hydrogen + (sulfur carrier)-SH + AH2 + 2 S-adenosyl-L-methionine = 3-methylsulfanyl-L-aspartate(89)-[ribosomal protein uS12]-hydrogen + (sulfur carrier)-H + 5'-deoxyadenosine + L-methionine + A + S-adenosyl-L-homocysteine + 2 H(+). Functionally, catalyzes the methylthiolation of an aspartic acid residue of ribosomal protein uS12. This Thermosynechococcus vestitus (strain NIES-2133 / IAM M-273 / BP-1) protein is Ribosomal protein uS12 methylthiotransferase RimO.